The chain runs to 260 residues: HTH-type transcriptional repressor NanR (260 aa).

A disordered region spans residues 1 to 22; the sequence is MNAFDSQAEDSPTSLGRSLRRR. The region spanning 27 to 95 is the HTH gntR-type domain; that stretch reads KKLSEMVEEE…NGERARVSRP (69 aa). Positions 55-74 form a DNA-binding region, H-T-H motif; that stretch reads ERELMAFFNVGRPSVREALA.

The protein belongs to the NanR family.

Its function is as follows. Transcriptional repressor that controls expression of the genes required for the catabolism of sialic acids. The polypeptide is HTH-type transcriptional repressor NanR (Salmonella newport (strain SL254)).